We begin with the raw amino-acid sequence, 1040 residues long: Multidrug resistance protein MdtB (1040 aa).

Transmembrane regions (helical) follow at residues 16–36 (FIMR…AGII), 347–367 (LMMA…NIPA), 369–389 (IIPG…MVFL), 396–416 (LTLM…IVVI), 440–460 (IGFT…PLLF), 472–492 (FAIT…TLTP), 537–557 (WLTL…WVFI), 863–883 (LGST…VLGI), 888–908 (FIHP…ALLA), 911–931 (IAGS…IGIV), 968–988 (ILMT…STGV), and 998–1018 (IGMV…TPVI).

The protein belongs to the resistance-nodulation-cell division (RND) (TC 2.A.6) family. MdtB subfamily. In terms of assembly, part of a tripartite efflux system composed of MdtA, MdtB and MdtC. MdtB forms a heteromultimer with MdtC.

The protein localises to the cell inner membrane. In terms of biological role, the MdtABC tripartite complex confers resistance against novobiocin and deoxycholate. This chain is Multidrug resistance protein MdtB, found in Escherichia coli (strain SE11).